The chain runs to 234 residues: Carboxy-S-adenosyl-L-methionine synthase (234 aa).

Residues Tyr-35, 60-62, 83-84, 109-110, Asn-124, and Arg-191 contribute to the S-adenosyl-L-methionine site; these read GCS, DN, and DI.

The protein belongs to the class I-like SAM-binding methyltransferase superfamily. Cx-SAM synthase family. In terms of assembly, homodimer.

The catalysed reaction is prephenate + S-adenosyl-L-methionine = carboxy-S-adenosyl-L-methionine + 3-phenylpyruvate + H2O. In terms of biological role, catalyzes the conversion of S-adenosyl-L-methionine (SAM) to carboxy-S-adenosyl-L-methionine (Cx-SAM). The chain is Carboxy-S-adenosyl-L-methionine synthase from Campylobacter concisus (strain 13826).